The chain runs to 201 residues: Recombination protein RecR (201 aa).

The segment at 60 to 75 adopts a C4-type zinc-finger fold; it reads CSVCGNIDTTDPCSIC. Residues 83-178 enclose the Toprim domain; it reads GTIIVVEDIS…KITRLAHGVP (96 aa).

Belongs to the RecR family.

May play a role in DNA repair. It seems to be involved in an RecBC-independent recombinational process of DNA repair. It may act with RecF and RecO. In Bartonella bacilliformis (strain ATCC 35685 / KC583 / Herrer 020/F12,63), this protein is Recombination protein RecR.